The primary structure comprises 117 residues: Ig heavy chain V region RF (117 aa).

A signal peptide spans 1–19 (MNFGLRLIFLVLVLKGVLC). Residues 20-49 (DVKLVESGGGLVKLGGSLKLSCAASGFTFS) are framework-1. Cysteines 41 and 115 form a disulfide. The complementarity-determining-1 stretch occupies residues 50 to 54 (SYYMS). Residues 55–68 (WVRQTPEKRLELVA) are framework-2. The segment at 69–85 (AINSNGGSTYYPDTVKG) is complementarity-determining-2. Residues 86–117 (RFTISRDNAKNTLYLQMSSLKSEDTALYYCAR) form a framework-3 region.

The protein is Ig heavy chain V region RF of Mus musculus (Mouse).